The primary structure comprises 435 residues: UPF0597 protein ASA_0240 (435 aa).

This sequence belongs to the UPF0597 family.

The sequence is that of UPF0597 protein ASA_0240 from Aeromonas salmonicida (strain A449).